The chain runs to 193 residues: Acyl carrier protein phosphodiesterase (193 aa).

It belongs to the AcpH family.

It catalyses the reaction holo-[ACP] + H2O = apo-[ACP] + (R)-4'-phosphopantetheine + H(+). Its function is as follows. Converts holo-ACP to apo-ACP by hydrolytic cleavage of the phosphopantetheine prosthetic group from ACP. In Enterobacter sp. (strain 638), this protein is Acyl carrier protein phosphodiesterase.